Here is a 262-residue protein sequence, read N- to C-terminus: 14-3-3 protein epsilon (262 aa).

The tract at residues 236–262 is disordered; the sequence is QAEEVDPNAGDGEPKEQIQDVEDQDVS. Position 262 is a phosphoserine (Ser-262).

It belongs to the 14-3-3 family. As to quaternary structure, homodimer. Interacts with phosphorylated yki. Interacts with pav (when serine phosphorylated); the interaction is necessary for association of the complex pav-14-3-3epsilon complex to the microtubules, thereby inhibiting microtubule sliding.

Functionally, positively regulates Ras-mediated pathways. Acts downstream or parallel to Raf, but upstream of nuclear factors in Ras signaling. Three mutants have been isolated, that suppress the rough eye phenotype caused by mutated Ras1 (sev-Ras1 v12). Inhibits yki activity by restricting its nuclear localization. Together with pav, has a role in the inhibition of microtubule sliding during neurite outgrowth. The chain is 14-3-3 protein epsilon (14-3-3epsilon) from Drosophila melanogaster (Fruit fly).